A 507-amino-acid chain; its full sequence is Transcription factor CP2 (507 aa).

The 240-residue stretch at 61-300 folds into the Grh/CP2 DB domain; it reads ENKILPFQYV…SPGFNSSHNS (240 aa). A DNA-binding region spans residues 133–395; the sequence is EHQQLEGWRW…LFNALKGRMV (263 aa). 2 disordered regions span residues 240–268 and 296–316; these read PKGA…YQPS and SSHN…QPEP. Positions 241 to 265 are enriched in basic and acidic residues; it reads KGADRKQKTDREKMEKRTPQEKEKY.

The protein belongs to the grh/CP2 family. CP2 subfamily. Component of the SSP (stage selector protein) complex, which appears to be a heteromer of TFCP2 and 2 copies of NFE4.

Its subcellular location is the nucleus. Its function is as follows. May function as a transcription factor. This chain is Transcription factor CP2 (tfcp2), found in Xenopus tropicalis (Western clawed frog).